The chain runs to 262 residues: MQQPIVGVGHSMGGCQIATLSVTSRRIFSTMILLDPAIGPPEMGLATLGLGQLTLRRRTQWLTREDAEKALRTSFSTWDPQVLDLLIKHSIHSDKQSVEMEDGPVSLVTGRYQELVNYIKPSFIRSGKVVGQELVHQTGPVDMYHMLGLVTCSTLYLCGGESTLSTPRARELWLSRTAELSYSKDPGEMRKVDERIVPDTGHFLPMEEPKECADIIADWIDKDECMIWNCHIGKQGNIWRDLSNTNRKMNAEVWIEYLQSKL.

The short motif at 260 to 262 (SKL) is the Peroxisomal targeting signal type 1 element.

The protein belongs to the AB hydrolase superfamily. AKT2 hydrolase family.

The protein resides in the peroxisome. It participates in mycotoxin biosynthesis. Its function is as follows. Abhydrolase domain-containing protein; part of the gene clusters that mediate the biosynthesis of the host-selective toxins (HSTs) ACT-toxins responsible for brown spot of tangerine disease by the tangerine pathotype which affects tangerines and mandarins. ACT-toxins consist of three moieties, 9,10-epoxy-8-hydroxy-9-methyl-decatrienoic acid (EDA), valine and a polyketide. ACT-toxin I is toxic to both citrus and pear; toxin II the 5''-deoxy derivative of ACT-toxin I, is highly toxic to pear and slightly toxic to citrus. On cellular level, ACT-toxins affect plasma membrane of susceptible cells and cause a sudden increase in loss of K(+) after a few minutes of toxin treatment. The acyl-CoA ligase ACTT1, the hydrolase ACTT2, the enoyl-CoA hydratases ACTT3 and ACTT6, and the acyl-CoA synthetase ACTT5 are all involved in the biosynthesis of the AK-, AF- and ACT-toxin common 9,10-epoxy-8-hydroxy-9-methyl-decatrienoic acid (EDA) structural moiety. The exact role of each enzyme, and of additional enzymes identified within the AF-toxin clusters have still to be determined. On the other hand, ACTTS1 to ACTTS4 are specific to the tangerine pathotype. The function of ACTTS3 is to elongate the polyketide chain portion of ACT-toxin that is unique to this toxin. The enoyl-reductase ACTTS2 might complement the missing enoyl-reductase (ER) domain in ACTTS3 in the synthesis of the polyketide portion of ACT-toxin. The roles of the nonribosomal peptide synthetases-related proteins ACTTS1 and ACTTS4 have also still not been elucidated. In Alternaria alternata (Alternaria rot fungus), this protein is Abhydrolase domain-containing protein ACTT2-1.